A 153-amino-acid polypeptide reads, in one-letter code: Lectin-like protein EP153R (153 aa).

Residues 1 to 30 lie on the Cytoplasmic side of the membrane; it reads MYFKKKYIGLIDKNCEKKILDDSSTIKICY. The helical transmembrane segment at 31-51 threads the bilayer; that stretch reads ILIGILIGTNMITLIYNFIFW. The Extracellular segment spans residues 52 to 153; it reads DNYIKCYRNN…YTDLLFICGK (102 aa). C67 and C78 are disulfide-bonded. Residues N83, N89, N101, N107, N113, N120, N127, and N143 are each glycosylated (N-linked (GlcNAc...) asparagine; by host). The cysteines at positions 97 and 151 are disulfide-linked.

Belongs to the asfivirus lectin-like protein family. In terms of assembly, homodimer.

It is found in the host endoplasmic reticulum membrane. In terms of biological role, down-regulates MHC-I expression by impairing the appropriate configuration or presentation into the plasma membrane of the latter. Participates in viral hemadsorption, which may help viral spread. Reduces the transactivating activity of host TP53, thus inhibiting apoptosis. Non-essential for virus growth in swine macrophage cell cultures. The sequence is that of Lectin-like protein EP153R from African swine fever virus (strain Badajoz 1971 Vero-adapted) (Ba71V).